A 138-amino-acid polypeptide reads, in one-letter code: Histone H2B.8 (138 aa).

Over residues 1–38 the composition is skewed to basic and acidic residues; the sequence is MAPKAAEKKPAGKKPAEKAPAEKLPKAEKKITKEGGSE. The interval 1-45 is disordered; it reads MAPKAAEKKPAGKKPAEKAPAEKLPKAEKKITKEGGSEKKKKKSK. N,N,N-trimethylalanine; alternate is present on alanine 2. N,N-dimethylalanine; alternate is present on alanine 2. Alanine 2 is modified (N-methylalanine; alternate). An N6-methyllysine modification is found at lysine 4. 2 positions are modified to N6-acetyllysine: lysine 8 and lysine 13. Lysine 14 carries the N6,N6-dimethyllysine modification. N6-acetyllysine is present on residues lysine 18, lysine 23, lysine 29, and lysine 30. Lysine 134 is covalently cross-linked (Glycyl lysine isopeptide (Lys-Gly) (interchain with G-Cter in ubiquitin)).

The protein belongs to the histone H2B family. In terms of assembly, the nucleosome is a histone octamer containing two molecules each of H2A, H2B, H3 and H4 assembled in one H3-H4 heterotetramer and two H2A-H2B heterodimers. The octamer wraps approximately 147 bp of DNA. Post-translationally, can be acetylated to form H2BK6ac, H2BK33ac and H2BK34ac. Monoubiquitinated by BRE1 to form H2BK143ub1 and deubiquitinated by UBP26. Required for heterochromatic histone H3 di- and trimethylation at H3K4me. May give a specific tag for epigenetic transcriptional activation.

The protein resides in the nucleus. Its subcellular location is the chromosome. In terms of biological role, core component of nucleosome. Nucleosomes wrap and compact DNA into chromatin, limiting DNA accessibility to the cellular machineries which require DNA as a template. Histones thereby play a central role in transcription regulation, DNA repair, DNA replication and chromosomal stability. DNA accessibility is regulated via a complex set of post-translational modifications of histones, also called histone code, and nucleosome remodeling. This chain is Histone H2B.8, found in Arabidopsis thaliana (Mouse-ear cress).